The following is a 466-amino-acid chain: Methylenetetrahydrofolate--tRNA-(uracil-5-)-methyltransferase TrmFO (466 aa).

14-19 contacts FAD; that stretch reads GGGLAG.

Belongs to the MnmG family. TrmFO subfamily. FAD serves as cofactor.

The protein resides in the cytoplasm. It carries out the reaction uridine(54) in tRNA + (6R)-5,10-methylene-5,6,7,8-tetrahydrofolate + NADH + H(+) = 5-methyluridine(54) in tRNA + (6S)-5,6,7,8-tetrahydrofolate + NAD(+). The enzyme catalyses uridine(54) in tRNA + (6R)-5,10-methylene-5,6,7,8-tetrahydrofolate + NADPH + H(+) = 5-methyluridine(54) in tRNA + (6S)-5,6,7,8-tetrahydrofolate + NADP(+). Its function is as follows. Catalyzes the folate-dependent formation of 5-methyl-uridine at position 54 (M-5-U54) in all tRNAs. This Brucella abortus (strain 2308) protein is Methylenetetrahydrofolate--tRNA-(uracil-5-)-methyltransferase TrmFO.